A 413-amino-acid polypeptide reads, in one-letter code: 1-deoxy-D-xylulose 5-phosphate reductoisomerase (413 aa).

Positions 28, 29, 30, 31, 54, 55, 56, and 142 each coordinate NADPH. 1-deoxy-D-xylulose 5-phosphate is bound at residue Lys143. Residue Glu144 coordinates NADPH. Mn(2+) is bound at residue Asp168. Residues Ser169, Glu170, Ser194, and His217 each coordinate 1-deoxy-D-xylulose 5-phosphate. Glu170 contributes to the Mn(2+) binding site. Residue Gly223 participates in NADPH binding. Ser230, Asn235, Lys236, and Glu239 together coordinate 1-deoxy-D-xylulose 5-phosphate. Residue Glu239 coordinates Mn(2+).

It belongs to the DXR family. The cofactor is Mg(2+). Mn(2+) serves as cofactor.

The catalysed reaction is 2-C-methyl-D-erythritol 4-phosphate + NADP(+) = 1-deoxy-D-xylulose 5-phosphate + NADPH + H(+). Its pathway is isoprenoid biosynthesis; isopentenyl diphosphate biosynthesis via DXP pathway; isopentenyl diphosphate from 1-deoxy-D-xylulose 5-phosphate: step 1/6. Functionally, catalyzes the NADPH-dependent rearrangement and reduction of 1-deoxy-D-xylulose-5-phosphate (DXP) to 2-C-methyl-D-erythritol 4-phosphate (MEP). The protein is 1-deoxy-D-xylulose 5-phosphate reductoisomerase of Thermosynechococcus vestitus (strain NIES-2133 / IAM M-273 / BP-1).